Reading from the N-terminus, the 624-residue chain is Steryl-sulfatase (624 aa).

The first 22 residues, Met1–Ala22, serve as a signal peptide directing secretion. Topologically, residues Asp24–Val192 are lumenal. The Ca(2+) site is built by Asp43 and Asp44. N-linked (GlcNAc...) asparagine glycosylation is present at Asn55. Residue Cys83 coordinates Ca(2+). The Nucleophile role is filled by Cys83. Cys83 carries the post-translational modification 3-oxoalanine (Cys). His144 is an active-site residue. 2 disulfide bridges follow: Cys149/Cys156 and Cys178/Cys250. Residues Phe193–Leu216 traverse the membrane as a helical segment. The Cytoplasmic portion of the chain corresponds to Ala217–Pro220. The chain crosses the membrane as a helical span at residues Gly221–Cys242. Residues Leu243–Arg624 lie on the Lumenal side of the membrane. Ca(2+) contacts are provided by Asp350 and His351. Intrachain disulfides connect Cys454/Cys495 and Cys487/Cys493. Asn465 carries an N-linked (GlcNAc...) asparagine glycan. The disordered stretch occupies residues Gly572–Arg624. Over residues Asp583 to Tyr611 the composition is skewed to basic and acidic residues.

The protein belongs to the sulfatase family. In terms of assembly, homodimer. Ca(2+) is required as a cofactor. The conversion to 3-oxoalanine (also known as C-formylglycine, FGly), of a serine or cysteine residue in prokaryotes and of a cysteine residue in eukaryotes, is critical for catalytic activity.

The protein localises to the microsome membrane. The protein resides in the endoplasmic reticulum membrane. The catalysed reaction is dehydroepiandrosterone 3-sulfate + H2O = 3beta-hydroxyandrost-5-en-17-one + sulfate + H(+). It catalyses the reaction estrone 3-sulfate + H2O = estrone + sulfate + H(+). In terms of biological role, catalyzes the conversion of sulfated steroid precursors, such as dehydroepiandrosterone sulfate (DHEA-S) and estrone sulfate to the free steroid. The protein is Steryl-sulfatase (Sts) of Mus musculus (Mouse).